The sequence spans 130 residues: MAKPTKKTGSKKTKRNVPNGVAHIQSTFNNTIVSIADTAGEVIAWSSAGASGFKGARKGTPFAAQTAAEAAARRALEQGMRQIEVLVRGPGSGRETAIRALQVAGLEITLIRDVTPLPHNGCRRPKRRRV.

Belongs to the universal ribosomal protein uS11 family. Part of the 30S ribosomal subunit. Interacts with proteins S7 and S18. Binds to IF-3.

In terms of biological role, located on the platform of the 30S subunit, it bridges several disparate RNA helices of the 16S rRNA. Forms part of the Shine-Dalgarno cleft in the 70S ribosome. This Prochlorococcus marinus (strain MIT 9313) protein is Small ribosomal subunit protein uS11.